A 294-amino-acid chain; its full sequence is N-acetylmuramic acid 6-phosphate etherase (294 aa).

Residues 54-217 (VIQSFEEEGR…STASMIGVGK (164 aa)) form the SIS domain. Glutamate 82 functions as the Proton donor in the catalytic mechanism. Residue glutamate 113 is part of the active site.

This sequence belongs to the GCKR-like family. MurNAc-6-P etherase subfamily. As to quaternary structure, homodimer.

The catalysed reaction is N-acetyl-D-muramate 6-phosphate + H2O = N-acetyl-D-glucosamine 6-phosphate + (R)-lactate. The protein operates within amino-sugar metabolism; N-acetylmuramate degradation. Functionally, specifically catalyzes the cleavage of the D-lactyl ether substituent of MurNAc 6-phosphate, producing GlcNAc 6-phosphate and D-lactate. The sequence is that of N-acetylmuramic acid 6-phosphate etherase from Bacillus cereus (strain AH820).